A 400-amino-acid chain; its full sequence is CCA-adding enzyme (400 aa).

ATP-binding residues include G28 and R31. 2 residues coordinate CTP: G28 and R31. The Mg(2+) site is built by D41 and D43. R112, D155, R158, R161, and R164 together coordinate ATP. R112, D155, R158, R161, and R164 together coordinate CTP.

Belongs to the tRNA nucleotidyltransferase/poly(A) polymerase family. Bacterial CCA-adding enzyme type 3 subfamily. As to quaternary structure, homodimer. It depends on Mg(2+) as a cofactor.

It carries out the reaction a tRNA precursor + 2 CTP + ATP = a tRNA with a 3' CCA end + 3 diphosphate. It catalyses the reaction a tRNA with a 3' CCA end + 2 CTP + ATP = a tRNA with a 3' CCACCA end + 3 diphosphate. In terms of biological role, catalyzes the addition and repair of the essential 3'-terminal CCA sequence in tRNAs without using a nucleic acid template. Adds these three nucleotides in the order of C, C, and A to the tRNA nucleotide-73, using CTP and ATP as substrates and producing inorganic pyrophosphate. tRNA 3'-terminal CCA addition is required both for tRNA processing and repair. Also involved in tRNA surveillance by mediating tandem CCA addition to generate a CCACCA at the 3' terminus of unstable tRNAs. While stable tRNAs receive only 3'-terminal CCA, unstable tRNAs are marked with CCACCA and rapidly degraded. The protein is CCA-adding enzyme of Oceanobacillus iheyensis (strain DSM 14371 / CIP 107618 / JCM 11309 / KCTC 3954 / HTE831).